Reading from the N-terminus, the 513-residue chain is Activin receptor type-2A (513 aa).

Positions 1 to 19 are cleaved as a signal peptide; that stretch reads MGAATKLAFAVFLISCSSG. Residues 20–139 are Extracellular-facing; sequence AILGRSETQE…VTPKPPLFNT (120 aa). 5 disulfides stabilise this stretch: cysteine 30/cysteine 60, cysteine 50/cysteine 78, cysteine 85/cysteine 104, cysteine 91/cysteine 103, and cysteine 105/cysteine 110. N-linked (GlcNAc...) asparagine glycosylation is found at asparagine 43 and asparagine 66. Residues 140–160 form a helical membrane-spanning segment; the sequence is LLYSLVPIMGIAVIVLFSFWM. Residues 161–513 lie on the Cytoplasmic side of the membrane; the sequence is YRHHKLAYPP…VDFPPKESSL (353 aa). The region spanning 192–485 is the Protein kinase domain; it reads LQLLEIKARG…EERIIQMQKL (294 aa). ATP contacts are provided by residues 198–206 and lysine 219; that span reads KARGRFGCV. Residue aspartate 322 is the Proton acceptor of the active site.

The protein belongs to the protein kinase superfamily. TKL Ser/Thr protein kinase family. TGFB receptor subfamily. Requires Mg(2+) as cofactor. It depends on Mn(2+) as a cofactor. Expressed in hen anterior pituitary during the ovulatory cycle and in the ovarian follicle.

It localises to the cell membrane. It carries out the reaction L-threonyl-[receptor-protein] + ATP = O-phospho-L-threonyl-[receptor-protein] + ADP + H(+). The catalysed reaction is L-seryl-[receptor-protein] + ATP = O-phospho-L-seryl-[receptor-protein] + ADP + H(+). Functionally, on ligand binding, forms a receptor complex consisting of two type II and two type I transmembrane serine/threonine kinases. Type II receptors phosphorylate and activate type I receptors which autophosphorylate, then bind and activate SMAD transcriptional regulators. Receptor for activin A, activin B and inhibin A. May modulate neuropeptide expression in dorsal root ganglia (DRG) neurons and ovarian follicle development. This is Activin receptor type-2A (ACVR2A) from Gallus gallus (Chicken).